Consider the following 101-residue polypeptide: Small ribosomal subunit protein uS14 (101 aa).

Belongs to the universal ribosomal protein uS14 family. Part of the 30S ribosomal subunit. Contacts proteins S3 and S10.

Its function is as follows. Binds 16S rRNA, required for the assembly of 30S particles and may also be responsible for determining the conformation of the 16S rRNA at the A site. The protein is Small ribosomal subunit protein uS14 of Delftia acidovorans (strain DSM 14801 / SPH-1).